A 115-amino-acid chain; its full sequence is Large ribosomal subunit protein bL20c (115 aa).

The protein belongs to the bacterial ribosomal protein bL20 family.

The protein localises to the plastid. The protein resides in the chloroplast. Binds directly to 23S ribosomal RNA and is necessary for the in vitro assembly process of the 50S ribosomal subunit. It is not involved in the protein synthesizing functions of that subunit. The sequence is that of Large ribosomal subunit protein bL20c from Cycas taitungensis (Prince sago).